Here is a 124-residue protein sequence, read N- to C-terminus: Small ribosomal subunit protein uS12 (124 aa).

Position 89 is a 3-methylthioaspartic acid (D89).

The protein belongs to the universal ribosomal protein uS12 family. As to quaternary structure, part of the 30S ribosomal subunit. Contacts proteins S8 and S17. May interact with IF1 in the 30S initiation complex.

In terms of biological role, with S4 and S5 plays an important role in translational accuracy. Interacts with and stabilizes bases of the 16S rRNA that are involved in tRNA selection in the A site and with the mRNA backbone. Located at the interface of the 30S and 50S subunits, it traverses the body of the 30S subunit contacting proteins on the other side and probably holding the rRNA structure together. The combined cluster of proteins S8, S12 and S17 appears to hold together the shoulder and platform of the 30S subunit. The protein is Small ribosomal subunit protein uS12 of Erwinia amylovora (Fire blight bacteria).